The chain runs to 75 residues: Protein B7 (75 aa).

This Human herpesvirus 6B (strain Z29) (HHV-6 variant B) protein is Protein B7 (B7).